The primary structure comprises 437 residues: Probable exopolygalacturonase C (437 aa).

A signal peptide spans 1 to 21 (MLITKTAFLAFLLSSVPLAHG). Residues Asn-25, Asn-42, Asn-82, Asn-99, and Asn-149 are each glycosylated (N-linked (GlcNAc...) asparagine). 2 PbH1 repeats span residues 215 to 236 (GTNI…AVGS) and 238 to 259 (SHNI…SIGS). Residue Asp-229 is the Proton donor of the active site. The active site involves His-253. Asn-269 is a glycosylation site (N-linked (GlcNAc...) asparagine). PbH1 repeat units lie at residues 270–291 (ITNL…RFKS) and 299–320 (VKNV…FVTQ). N-linked (GlcNAc...) asparagine glycans are attached at residues Asn-301 and Asn-311. A disulfide bridge connects residues Cys-386 and Cys-392. Residues Asn-428 and Asn-431 are each glycosylated (N-linked (GlcNAc...) asparagine).

Belongs to the glycosyl hydrolase 28 family.

It is found in the secreted. The catalysed reaction is [(1-&gt;4)-alpha-D-galacturonosyl](n) + H2O = alpha-D-galacturonate + [(1-&gt;4)-alpha-D-galacturonosyl](n-1). In terms of biological role, specific in hydrolyzing the terminal glycosidic bond of polygalacturonic acid and oligogalacturonates. In Aspergillus flavus (strain ATCC 200026 / FGSC A1120 / IAM 13836 / NRRL 3357 / JCM 12722 / SRRC 167), this protein is Probable exopolygalacturonase C (pgxC).